The following is a 245-amino-acid chain: 1-(5-phosphoribosyl)-5-[(5-phosphoribosylamino)methylideneamino] imidazole-4-carboxamide isomerase (245 aa).

The Proton acceptor role is filled by aspartate 7. Residue aspartate 129 is the Proton donor of the active site.

Belongs to the HisA/HisF family.

The protein localises to the cytoplasm. It catalyses the reaction 1-(5-phospho-beta-D-ribosyl)-5-[(5-phospho-beta-D-ribosylamino)methylideneamino]imidazole-4-carboxamide = 5-[(5-phospho-1-deoxy-D-ribulos-1-ylimino)methylamino]-1-(5-phospho-beta-D-ribosyl)imidazole-4-carboxamide. Its pathway is amino-acid biosynthesis; L-histidine biosynthesis; L-histidine from 5-phospho-alpha-D-ribose 1-diphosphate: step 4/9. This Vibrio campbellii (strain ATCC BAA-1116) protein is 1-(5-phosphoribosyl)-5-[(5-phosphoribosylamino)methylideneamino] imidazole-4-carboxamide isomerase.